Consider the following 222-residue polypeptide: Pyridoxine/pyridoxamine 5'-phosphate oxidase (222 aa).

Substrate contacts are provided by residues 16–19 and Lys75; that span reads RVSY. FMN-binding positions include 70–75, 85–86, Lys92, and Gln114; these read RTVLCK and FT. Residues Tyr132, Arg136, and Ser140 each coordinate substrate. Residues 149–150 and Trp195 each bind FMN; that span reads QS. Residue 201–203 participates in substrate binding; the sequence is RLH. Arg205 provides a ligand contact to FMN.

The protein belongs to the pyridoxamine 5'-phosphate oxidase family. Homodimer. FMN is required as a cofactor.

The catalysed reaction is pyridoxamine 5'-phosphate + O2 + H2O = pyridoxal 5'-phosphate + H2O2 + NH4(+). It carries out the reaction pyridoxine 5'-phosphate + O2 = pyridoxal 5'-phosphate + H2O2. The protein operates within cofactor metabolism; pyridoxal 5'-phosphate salvage; pyridoxal 5'-phosphate from pyridoxamine 5'-phosphate: step 1/1. It participates in cofactor metabolism; pyridoxal 5'-phosphate salvage; pyridoxal 5'-phosphate from pyridoxine 5'-phosphate: step 1/1. Functionally, catalyzes the oxidation of either pyridoxine 5'-phosphate (PNP) or pyridoxamine 5'-phosphate (PMP) into pyridoxal 5'-phosphate (PLP). In Saccharopolyspora erythraea (strain ATCC 11635 / DSM 40517 / JCM 4748 / NBRC 13426 / NCIMB 8594 / NRRL 2338), this protein is Pyridoxine/pyridoxamine 5'-phosphate oxidase.